The chain runs to 428 residues: Cholesterol 7-desaturase (428 aa).

Residues 6–26 traverse the membrane as a helical segment; sequence IWGFLTAHPISVVTTILIVYL. One can recognise a Rieske domain in the interval 81 to 187; sequence WYCVCESEKL…CIERNNNIYL (107 aa). [2Fe-2S] cluster-binding residues include C122, H124, C143, and H146.

It belongs to the cholesterol 7-desaturase family. [2Fe-2S] cluster serves as cofactor. As to expression, expressed in intestine at all postembryonic stages, including dauer. Expression is reduced in daf-2 mutants.

It is found in the membrane. It carries out the reaction cholesterol + NADPH + O2 + H(+) = 7-dehydrocholesterol + NADP(+) + 2 H2O. The catalysed reaction is cholesterol + NADH + O2 + H(+) = 7-dehydrocholesterol + NAD(+) + 2 H2O. The protein operates within steroid hormone biosynthesis; dafachronic acid biosynthesis. In terms of biological role, catalyzes the production of 7-dehydrocholesterol (7-DHC or cholesta-5,7-dien-3beta-ol) by inserting a double bond (desaturating) at the C7-C8 single bond of cholesterol. This reaction is the first step in the synthesis of the steroid hormone Delta(7)-dafachronic acid (one of the principal steroid hormones in nematodes). Dafachronic acids bind directly to the nuclear hormone receptor (NHR) daf-12, suppressing dauer formation and inducing reproductive growth. In Caenorhabditis elegans, this protein is Cholesterol 7-desaturase (daf-36).